The sequence spans 274 residues: Diaminopimelate epimerase (274 aa).

3 residues coordinate substrate: N11, Q44, and N64. C73 functions as the Proton donor in the catalytic mechanism. Residues G74–N75, N157, N190, and E208–R209 contribute to the substrate site. The Proton acceptor role is filled by C217. Position 218 to 219 (G218 to S219) interacts with substrate.

This sequence belongs to the diaminopimelate epimerase family. In terms of assembly, homodimer.

Its subcellular location is the cytoplasm. The catalysed reaction is (2S,6S)-2,6-diaminopimelate = meso-2,6-diaminopimelate. It functions in the pathway amino-acid biosynthesis; L-lysine biosynthesis via DAP pathway; DL-2,6-diaminopimelate from LL-2,6-diaminopimelate: step 1/1. Its function is as follows. Catalyzes the stereoinversion of LL-2,6-diaminopimelate (L,L-DAP) to meso-diaminopimelate (meso-DAP), a precursor of L-lysine and an essential component of the bacterial peptidoglycan. The sequence is that of Diaminopimelate epimerase from Edwardsiella ictaluri (strain 93-146).